A 208-amino-acid polypeptide reads, in one-letter code: Small ribosomal subunit protein uS4 (208 aa).

An S4 RNA-binding domain is found at 98–159 (RRLDNVIYRL…KSRTVAVITN (62 aa)).

This sequence belongs to the universal ribosomal protein uS4 family. As to quaternary structure, part of the 30S ribosomal subunit. Contacts protein S5. The interaction surface between S4 and S5 is involved in control of translational fidelity.

One of the primary rRNA binding proteins, it binds directly to 16S rRNA where it nucleates assembly of the body of the 30S subunit. Its function is as follows. With S5 and S12 plays an important role in translational accuracy. This is Small ribosomal subunit protein uS4 from Desulfatibacillum aliphaticivorans.